The primary structure comprises 472 residues: MENFKHLPEPFRIRVIEPVKRTTREYREQAILKSGMNPFLLDSEDIFIDLLTDSGTGAVTQDMQAAMLRGDEAYSGSRSYYALAKAVKDIFGYEYTIPTHQGRGAEQIYIPVLIAKREREKGLDRSKMVVFSNYFFDTTQGHSQINGATVRNVYIKEAFDTTAKHPFKGNFDLEKLEKGIQEAGAHNVPYIVCTITCNSAGGQPVSIANLKGMYEIARKYDIPVIMDSARFAENAYFVQQREEAYKDWTIEQITYESYRYADGLAMSAKKDAMVPMGGILAFKDKSMEEVYHECRTLCVVQEGFPTYGGLEGGAMERLAVGLHDGMRQEWLAYRIAQIEYLVAGLEKIGVLCQQPGGHAAFVDAGKLLPHIPADQFPAQALSCELYKVAGIRAVEIGSFLLGRDPKTGKQLPCPAELLRLTVPRATYTQTHMDFIIEAFQKVKENAENIKGLTFTYEPKVLRHFTARLKEVE.

Lys-270 is modified (N6-(pyridoxal phosphate)lysine).

The protein belongs to the beta-eliminating lyase family. Homotetramer. The cofactor is pyridoxal 5'-phosphate.

The catalysed reaction is L-tryptophan + H2O = indole + pyruvate + NH4(+). It functions in the pathway amino-acid degradation; L-tryptophan degradation via pyruvate pathway; indole and pyruvate from L-tryptophan: step 1/1. This is Tryptophanase (tnaA) from Haemophilus influenzae.